We begin with the raw amino-acid sequence, 417 residues long: Serine hydroxymethyltransferase (417 aa).

(6S)-5,6,7,8-tetrahydrofolate contacts are provided by residues leucine 121 and 125–127 (GHL). Lysine 229 carries the post-translational modification N6-(pyridoxal phosphate)lysine. Residue 355-357 (SPF) coordinates (6S)-5,6,7,8-tetrahydrofolate.

Belongs to the SHMT family. Homodimer. The cofactor is pyridoxal 5'-phosphate.

The protein resides in the cytoplasm. The enzyme catalyses (6R)-5,10-methylene-5,6,7,8-tetrahydrofolate + glycine + H2O = (6S)-5,6,7,8-tetrahydrofolate + L-serine. It functions in the pathway one-carbon metabolism; tetrahydrofolate interconversion. The protein operates within amino-acid biosynthesis; glycine biosynthesis; glycine from L-serine: step 1/1. Its function is as follows. Catalyzes the reversible interconversion of serine and glycine with tetrahydrofolate (THF) serving as the one-carbon carrier. This reaction serves as the major source of one-carbon groups required for the biosynthesis of purines, thymidylate, methionine, and other important biomolecules. Also exhibits THF-independent aldolase activity toward beta-hydroxyamino acids, producing glycine and aldehydes, via a retro-aldol mechanism. In Shewanella amazonensis (strain ATCC BAA-1098 / SB2B), this protein is Serine hydroxymethyltransferase.